We begin with the raw amino-acid sequence, 254 residues long: Triosephosphate isomerase (254 aa).

Position 10–12 (10–12) interacts with substrate; it reads NWK. Residue histidine 99 is the Electrophile of the active site. The active-site Proton acceptor is the glutamate 169. Substrate-binding positions include glycine 175, serine 215, and 236–237; that span reads GG.

It belongs to the triosephosphate isomerase family. As to quaternary structure, homodimer.

Its subcellular location is the cytoplasm. The catalysed reaction is D-glyceraldehyde 3-phosphate = dihydroxyacetone phosphate. It functions in the pathway carbohydrate biosynthesis; gluconeogenesis. It participates in carbohydrate degradation; glycolysis; D-glyceraldehyde 3-phosphate from glycerone phosphate: step 1/1. In terms of biological role, involved in the gluconeogenesis. Catalyzes stereospecifically the conversion of dihydroxyacetone phosphate (DHAP) to D-glyceraldehyde-3-phosphate (G3P). This chain is Triosephosphate isomerase, found in Chlamydia caviae (strain ATCC VR-813 / DSM 19441 / 03DC25 / GPIC) (Chlamydophila caviae).